A 214-amino-acid chain; its full sequence is Redox-sensing transcriptional repressor Rex (214 aa).

A DNA-binding region (H-T-H motif) is located at residues 17 to 56 (LYYRIFKRFHADQVEKASSKQIADAMGIDSATVRRDFSYF). Position 91 to 96 (91 to 96 (GCGNIG)) interacts with NAD(+).

This sequence belongs to the transcriptional regulatory Rex family. Homodimer.

The protein localises to the cytoplasm. In terms of biological role, modulates transcription in response to changes in cellular NADH/NAD(+) redox state. In Streptococcus pyogenes serotype M4 (strain MGAS10750), this protein is Redox-sensing transcriptional repressor Rex.